The sequence spans 179 residues: ATP synthase subunit delta (179 aa).

The protein belongs to the ATPase delta chain family. F-type ATPases have 2 components, F(1) - the catalytic core - and F(0) - the membrane proton channel. F(1) has five subunits: alpha(3), beta(3), gamma(1), delta(1), epsilon(1). F(0) has three main subunits: a(1), b(2) and c(10-14). The alpha and beta chains form an alternating ring which encloses part of the gamma chain. F(1) is attached to F(0) by a central stalk formed by the gamma and epsilon chains, while a peripheral stalk is formed by the delta and b chains.

The protein localises to the cell membrane. Functionally, f(1)F(0) ATP synthase produces ATP from ADP in the presence of a proton or sodium gradient. F-type ATPases consist of two structural domains, F(1) containing the extramembraneous catalytic core and F(0) containing the membrane proton channel, linked together by a central stalk and a peripheral stalk. During catalysis, ATP synthesis in the catalytic domain of F(1) is coupled via a rotary mechanism of the central stalk subunits to proton translocation. In terms of biological role, this protein is part of the stalk that links CF(0) to CF(1). It either transmits conformational changes from CF(0) to CF(1) or is implicated in proton conduction. The polypeptide is ATP synthase subunit delta (Listeria welshimeri serovar 6b (strain ATCC 35897 / DSM 20650 / CCUG 15529 / CIP 8149 / NCTC 11857 / SLCC 5334 / V8)).